The primary structure comprises 547 residues: CTP synthase (547 aa).

The segment at 1 to 266 (MTKYIFVTGG…GDYLVERLGL (266 aa)) is amidoligase domain. Position 13 (Ser-13) interacts with CTP. Residue Ser-13 participates in UTP binding. 14 to 19 (SVGKGI) is an ATP binding site. Tyr-54 lines the L-glutamine pocket. Residue Asp-71 coordinates ATP. The Mg(2+) site is built by Asp-71 and Glu-141. Residues 148 to 150 (DIE), 187 to 192 (KTKPTQ), and Lys-223 contribute to the CTP site. UTP contacts are provided by residues 187–192 (KTKPTQ) and Lys-223. Residues 291–533 (PIALVGKYVE…IAAAAQTLLA (243 aa)) form the Glutamine amidotransferase type-1 domain. Gly-353 lines the L-glutamine pocket. Cys-380 (nucleophile; for glutamine hydrolysis) is an active-site residue. L-glutamine is bound by residues 381 to 384 (LGMQ), Glu-404, and Arg-461. Residues His-506 and Glu-508 contribute to the active site.

Belongs to the CTP synthase family. Homotetramer.

It carries out the reaction UTP + L-glutamine + ATP + H2O = CTP + L-glutamate + ADP + phosphate + 2 H(+). The catalysed reaction is L-glutamine + H2O = L-glutamate + NH4(+). It catalyses the reaction UTP + NH4(+) + ATP = CTP + ADP + phosphate + 2 H(+). It participates in pyrimidine metabolism; CTP biosynthesis via de novo pathway; CTP from UDP: step 2/2. Allosterically activated by GTP, when glutamine is the substrate; GTP has no effect on the reaction when ammonia is the substrate. The allosteric effector GTP functions by stabilizing the protein conformation that binds the tetrahedral intermediate(s) formed during glutamine hydrolysis. Inhibited by the product CTP, via allosteric rather than competitive inhibition. Catalyzes the ATP-dependent amination of UTP to CTP with either L-glutamine or ammonia as the source of nitrogen. Regulates intracellular CTP levels through interactions with the four ribonucleotide triphosphates. The chain is CTP synthase from Chloroflexus aggregans (strain MD-66 / DSM 9485).